Here is a 118-residue protein sequence, read N- to C-terminus: Large ribosomal subunit protein bL21c (118 aa).

The protein belongs to the bacterial ribosomal protein bL21 family. As to quaternary structure, part of the 50S ribosomal subunit.

The protein localises to the plastid. It localises to the chloroplast. This protein binds to 23S rRNA. The polypeptide is Large ribosomal subunit protein bL21c (Zygnema circumcarinatum (Green alga)).